The following is a 294-amino-acid chain: 4-diphosphocytidyl-2-C-methyl-D-erythritol kinase (294 aa).

Lysine 15 is an active-site residue. 101–111 (PSEAGLGGGSS) contributes to the ATP binding site. Aspartate 143 is an active-site residue.

This sequence belongs to the GHMP kinase family. IspE subfamily.

The enzyme catalyses 4-CDP-2-C-methyl-D-erythritol + ATP = 4-CDP-2-C-methyl-D-erythritol 2-phosphate + ADP + H(+). The protein operates within isoprenoid biosynthesis; isopentenyl diphosphate biosynthesis via DXP pathway; isopentenyl diphosphate from 1-deoxy-D-xylulose 5-phosphate: step 3/6. In terms of biological role, catalyzes the phosphorylation of the position 2 hydroxy group of 4-diphosphocytidyl-2C-methyl-D-erythritol. The sequence is that of 4-diphosphocytidyl-2-C-methyl-D-erythritol kinase from Fusobacterium nucleatum subsp. nucleatum (strain ATCC 25586 / DSM 15643 / BCRC 10681 / CIP 101130 / JCM 8532 / KCTC 2640 / LMG 13131 / VPI 4355).